Reading from the N-terminus, the 102-residue chain is Large ribosomal subunit protein bL21 (102 aa).

It belongs to the bacterial ribosomal protein bL21 family. In terms of assembly, part of the 50S ribosomal subunit. Contacts protein L20.

Functionally, this protein binds to 23S rRNA in the presence of protein L20. This is Large ribosomal subunit protein bL21 from Neisseria meningitidis serogroup A / serotype 4A (strain DSM 15465 / Z2491).